The sequence spans 399 residues: Nitric oxide reductase (399 aa).

Residues 32 to 221 (HRGTTYNAYL…DEIQKINLAI (190 aa)) are zinc metallo-hydrolase. Fe cation-binding residues include His-81, Glu-83, Asp-85, His-148, Asp-167, and His-228. The region spanning 255 to 394 (AVIAYDTMWL…RCYELGRKIA (140 aa)) is the Flavodoxin-like domain.

In the N-terminal section; belongs to the zinc metallo-hydrolase group 3 family. As to quaternary structure, homodimer. Requires FMN as cofactor. The cofactor is Fe cation.

Functionally, has nitric oxide reductase activity in combination with Hrb; probably involved in nitrosative stress protection. The protein is Nitric oxide reductase (fprA) of Moorella thermoacetica (strain ATCC 39073 / JCM 9320).